The primary structure comprises 309 residues: Malate dehydrogenase (309 aa).

NAD(+) is bound by residues 9–14 and Asp-33; that span reads GAGAVG. Substrate is bound by residues Arg-82 and Arg-88. NAD(+) is bound by residues Asn-95 and 118-120; that span reads VTN. Residues Asn-120 and Arg-151 each contribute to the substrate site. His-175 functions as the Proton acceptor in the catalytic mechanism.

This sequence belongs to the LDH/MDH superfamily. MDH type 3 family.

The enzyme catalyses (S)-malate + NAD(+) = oxaloacetate + NADH + H(+). Catalyzes the reversible oxidation of malate to oxaloacetate. This is Malate dehydrogenase from Thermomicrobium roseum (strain ATCC 27502 / DSM 5159 / P-2).